The chain runs to 331 residues: Anthranilate phosphoribosyltransferase (331 aa).

Residues G79, 82–83 (GD), S87, 89–92 (NIST), 107–115 (KHCNTSISS), and S119 each bind 5-phospho-alpha-D-ribose 1-diphosphate. Anthranilate is bound at residue G79. Residue S91 participates in Mg(2+) binding. An anthranilate-binding site is contributed by N110. An anthranilate-binding site is contributed by R165. Mg(2+)-binding residues include D223 and E224.

The protein belongs to the anthranilate phosphoribosyltransferase family. In terms of assembly, homodimer. Mg(2+) serves as cofactor.

It carries out the reaction N-(5-phospho-beta-D-ribosyl)anthranilate + diphosphate = 5-phospho-alpha-D-ribose 1-diphosphate + anthranilate. The protein operates within amino-acid biosynthesis; L-tryptophan biosynthesis; L-tryptophan from chorismate: step 2/5. Catalyzes the transfer of the phosphoribosyl group of 5-phosphorylribose-1-pyrophosphate (PRPP) to anthranilate to yield N-(5'-phosphoribosyl)-anthranilate (PRA). This chain is Anthranilate phosphoribosyltransferase, found in Buchnera aphidicola subsp. Schlechtendalia chinensis.